The chain runs to 1006 residues: Pleckstrin homology domain-containing family G member 5 (1006 aa).

Disordered stretches follow at residues 1-71 (MHYD…HTDD), 148-198 (PAKP…DILA), and 212-242 (EASIPGQEPPTPSSCSLPSGSSGSTNTGDSW). A compositionally biased stretch (acidic residues) spans 36-45 (DLEEEEEESS). Basic and acidic residues-rich tracts occupy residues 151–165 (PGDEGKVEQGMKDSK) and 183–194 (ERVDAQSRRESL). The span at 224-242 (SSCSLPSGSSGSTNTGDSW) shows a compositional bias: low complexity. The DH domain occupies 336–528 (HQQEAVWELL…ERFIHHVNAC (193 aa)). The PH domain maps to 584–684 (QLLLEGSLRM…WVDTIYNAQN (101 aa)). Disordered stretches follow at residues 690–754 (RAQE…ASDG), 768–820 (DTLS…SAYG), and 837–863 (AELVPRAPESPRVPSPPPSPRLRRRTP). Acidic residues predominate over residues 704–726 (LEEEEDEQEEEEEEEEEEEEGED). Polar residues-rich tracts occupy residues 727–754 (SGTSAASSPTIMRKSSGSPDSQHCASDG) and 769–785 (TLSSPEFDSGPFSSQSD). Thr729 carries the post-translational modification Phosphothreonine. A Phosphoserine modification is found at Ser734. The span at 786–803 (ETSLSTTASSATPTSELL) shows a compositional bias: low complexity. Residues 847 to 856 (PRVPSPPPSP) show a composition bias toward pro residues. Phosphoserine is present on residues Ser851, Ser876, and Ser881. The segment at 950–979 (AGSHRKRCGDLPSGASPRVQPEPPPGVSAQ) is disordered.

In terms of assembly, interacts with GIPC1/synectin and RHOA. Predominantly expressed in the peripheral nervous system and brain. Highest expression is observed in heart, lung, kidney, testis and moderate expression is present in spleen, pancreas, skeletal muscle, ovary and liver. Weakly expressed in glioblastoma (GBM) cell lines.

It localises to the cytoplasm. The protein resides in the perinuclear region. The protein localises to the cell membrane. It is found in the cell junction. Its subcellular location is the cell projection. It localises to the lamellipodium. Its function is as follows. Functions as a guanine exchange factor (GEF) for RAB26 and thus regulates autophagy of synaptic vesicles in axon terminal of motoneurons. Involved in the control of neuronal cell differentiation. Plays a role in angiogenesis through regulation of endothelial cells chemotaxis. Also affects the migration, adhesion, and matrix/bone degradation in macrophages and osteoclasts. In Homo sapiens (Human), this protein is Pleckstrin homology domain-containing family G member 5 (PLEKHG5).